A 331-amino-acid chain; its full sequence is Holliday junction branch migration complex subunit RuvB (331 aa).

Residues 4-182 (KDILQSSECI…FGIPMHLEFY (179 aa)) form a large ATPase domain (RuvB-L) region. Residues R22, G63, K66, T67, T68, 129 to 131 (EDF), R172, Y182, and R219 each bind ATP. Residue T67 participates in Mg(2+) binding. A small ATPAse domain (RuvB-S) region spans residues 183–253 (STEELTKVIK…FADQALLRLG (71 aa)). The head domain (RuvB-H) stretch occupies residues 256 to 331 (KLGLDRQDIK…SYLNEQTYNM (76 aa)). 2 residues coordinate DNA: R309 and R314.

It belongs to the RuvB family. As to quaternary structure, homohexamer. Forms an RuvA(8)-RuvB(12)-Holliday junction (HJ) complex. HJ DNA is sandwiched between 2 RuvA tetramers; dsDNA enters through RuvA and exits via RuvB. An RuvB hexamer assembles on each DNA strand where it exits the tetramer. Each RuvB hexamer is contacted by two RuvA subunits (via domain III) on 2 adjacent RuvB subunits; this complex drives branch migration. In the full resolvosome a probable DNA-RuvA(4)-RuvB(12)-RuvC(2) complex forms which resolves the HJ.

Its subcellular location is the cytoplasm. It catalyses the reaction ATP + H2O = ADP + phosphate + H(+). Functionally, the RuvA-RuvB-RuvC complex processes Holliday junction (HJ) DNA during genetic recombination and DNA repair, while the RuvA-RuvB complex plays an important role in the rescue of blocked DNA replication forks via replication fork reversal (RFR). RuvA specifically binds to HJ cruciform DNA, conferring on it an open structure. The RuvB hexamer acts as an ATP-dependent pump, pulling dsDNA into and through the RuvAB complex. RuvB forms 2 homohexamers on either side of HJ DNA bound by 1 or 2 RuvA tetramers; 4 subunits per hexamer contact DNA at a time. Coordinated motions by a converter formed by DNA-disengaged RuvB subunits stimulates ATP hydrolysis and nucleotide exchange. Immobilization of the converter enables RuvB to convert the ATP-contained energy into a lever motion, pulling 2 nucleotides of DNA out of the RuvA tetramer per ATP hydrolyzed, thus driving DNA branch migration. The RuvB motors rotate together with the DNA substrate, which together with the progressing nucleotide cycle form the mechanistic basis for DNA recombination by continuous HJ branch migration. Branch migration allows RuvC to scan DNA until it finds its consensus sequence, where it cleaves and resolves cruciform DNA. The sequence is that of Holliday junction branch migration complex subunit RuvB from Ehrlichia ruminantium (strain Gardel).